Here is a 1530-residue protein sequence, read N- to C-terminus: Neurexin-1 (1530 aa).

An N-terminal signal peptide occupies residues 1–30; that stretch reads MGTALVQHGGCCLLCLSLLLLGCWAELGSG. Residues 31-217 enclose the Laminin G-like 1 domain; the sequence is LEFPGAEGQW…PPNSGGGSPC (187 aa). Residues 31 to 1454 lie on the Extracellular side of the membrane; sequence LEFPGAEGQW…EVIRESSSTT (1424 aa). 2 N-linked (GlcNAc...) asparagine glycosylation sites follow: asparagine 125 and asparagine 190. Positions 196–219 are disordered; the sequence is PVDGSEVKLDEEPPNSGGGSPCEA. The region spanning 213–255 is the EGF-like 1 domain; that stretch reads GGSPCEAGDEGDGGVCLNGGVCSVVDDQAVCDCSRTGFRGKDC. Cystine bridges form between cysteine 228–cysteine 243 and cysteine 245–cysteine 255. 2 Laminin G-like domains span residues 299-496 and 503-695; these read IATF…AFKC and DPIT…KPSC. Residues aspartate 345, leucine 362, and methionine 430 each contribute to the Ca(2+) site. 5 cysteine pairs are disulfide-bonded: cysteine 460-cysteine 496, cysteine 666-cysteine 695, cysteine 703-cysteine 714, cysteine 708-cysteine 723, and cysteine 725-cysteine 735. The 38-residue stretch at 699 to 736 folds into the EGF-like 2 domain; the sequence is TAKPCLSNPCKNNGMCRDGWNRYVCDCSGTGYLGRSCE. Laminin G-like domains lie at 741–914 and 928–1103; these read VLSY…IDYC and DPVT…ERGC. Residues aspartate 788 and leucine 805 each coordinate Ca(2+). Residue asparagine 813 is glycosylated (N-linked (GlcNAc...) asparagine). Position 864 (arginine 864) interacts with Ca(2+). Cystine bridges form between cysteine 906–cysteine 914, cysteine 1075–cysteine 1103, cysteine 1110–cysteine 1121, cysteine 1115–cysteine 1130, and cysteine 1132–cysteine 1142. One can recognise an EGF-like 3 domain in the interval 1106–1143; the sequence is PSTTCQEDSCSNQGVCLQQWDGFSCDCSMTSFSGPLCN. Residues 1149–1347 form the Laminin G-like 6 domain; sequence YIFSKGGGQI…DANIAIVGNV (199 aa). 2 residues coordinate Ca(2+): aspartate 1199 and valine 1216. The N-linked (GlcNAc...) asparagine glycan is linked to asparagine 1246. Isoleucine 1298 and asparagine 1300 together coordinate Ca(2+). Residue serine 1408 is glycosylated (O-linked (Xyl...) (heparan sulfate) serine). Residues 1412 to 1443 form a disordered region; that stretch reads PSDDEDIDPCEPSSGGLANPTRVGGREPYPGS. A helical membrane pass occupies residues 1455-1475; the sequence is GMVVGIVAAAALCILILLYAM. Residues 1476–1530 lie on the Cytoplasmic side of the membrane; that stretch reads YKYRNRDEGSYHVDESRNYISNSAQSNGAVVKEKQPSSAKSANKNKKNKDKEYYV. An interaction with CASK region spans residues 1497–1523; that stretch reads NSAQSNGAVVKEKQPSSAKSANKNKKN. Residues 1497 to 1530 form a disordered region; sequence NSAQSNGAVVKEKQPSSAKSANKNKKNKDKEYYV.

It belongs to the neurexin family. As to quaternary structure, interacts (via laminin G-like domain 2 and/or laminin G-like domain 6) with NLGN1 forming a heterotetramer, where one NLGN1 dimer interacts with one NRXN1 dimer. Also interacts (via laminin G-like domain 2 and/or laminin G-like domain 6) with NLGN2, NLGN3 and NLGN4L; interactions with NLGN1, NLGN2, NLGN3 and NLGN4L are calcium-dependent. Interacts (via cytoplasmic C-terminal region) with CASK (via the PDZ, SH3 and guanylate kinase-like domains). Interacts (via cytoplasmic C-terminus) with CASKIN1 and APBA1. Interacts (via laminin G-like domain 2) with NXPH1 and NXPH3. Alpha-type isoforms (neurexin-1-alpha) interact (via laminin G-like domain 2 and/or laminin G-like domain 6) with DAG1 (via alpha-dystroglycan chain). Interacts with LRRTM1, LRRTM2, LRRTM3 and LRRTM4. Interacts with SYT13 and SYTL1. Interacts with CBLN1, CBLN2 and, less avidly, with CBLN4. Interacts with CLSTN3. Alpha-type isoforms interact with alpha-latrotoxin from spider venom. In terms of processing, O-glycosylated; contains heparan sulfate. Heparan sulfate attachment is required for synapse development by mediating interactions with neuroligins and LRRTM2. In terms of tissue distribution, brain (neuronal synapse).

Its subcellular location is the presynaptic cell membrane. Its function is as follows. Cell surface protein involved in cell-cell-interactions, exocytosis of secretory granules and regulation of signal transmission. Function is isoform-specific. Alpha-type isoforms have a long N-terminus with six laminin G-like domains and play an important role in synaptic signal transmission. Alpha-type isoforms play a role in the regulation of calcium channel activity and Ca(2+)-triggered neurotransmitter release at synapses and at neuromuscular junctions. They play an important role in Ca(2+)-triggered exocytosis of secretory granules in pituitary gland. They may affect their functions at synapses and in endocrine cells via their interactions with proteins from the exocytotic machinery. Likewise, alpha-type isoforms play a role in regulating the activity of postsynaptic NMDA receptors, a subtype of glutamate-gated ion channels. Both alpha-type and beta-type isoforms may play a role in the formation or maintenance of synaptic junctions via their interactions (via the extracellular domains) with neuroligin family members, CBLN1 or CBLN2. In vitro, triggers the de novo formation of presynaptic structures. May be involved in specification of excitatory synapses. Alpha-type isoforms were first identified as receptors for alpha-latrotoxin from spider venom. This Rattus norvegicus (Rat) protein is Neurexin-1 (Nrxn1).